The following is a 418-amino-acid chain: 6-methylpretetramide 4-monooxygenase (418 aa).

Residues aspartate 15–arginine 44 and tryptophan 289–aspartate 299 contribute to the FAD site.

This sequence belongs to the PheA/TfdB FAD monooxygenase family. FAD is required as a cofactor.

The catalysed reaction is 6-methylpretetramide + NADPH + O2 + 2 H(+) = 4-hydroxy-6-methylpretetramide + NADP(+) + H2O. Its pathway is antibiotic biosynthesis; oxytetracycline biosynthesis. Involved in the biosynthesis of the tetracycline antibiotic, oxytetracycline. Catalyzes the C-4 hydroxylation of 6-methylpretetramide to yield the intermediate 4-hydroxyl-6-methylpretetramid, which is subsequently hydroxylated by OxyL to yield 4-keto-anhydrotetracycline. OxyE serves as the ancillary enzyme to assist OxyL in the hydroxylation of C-4. The polypeptide is 6-methylpretetramide 4-monooxygenase (Streptomyces rimosus).